Here is a 1024-residue protein sequence, read N- to C-terminus: Gamma-tubulin complex component 5 (1024 aa).

Disordered stretches follow at residues 155 to 203 (IGPY…LDPC) and 521 to 545 (TENE…SSRQ). Residues 189–203 (TPLEEQDQNRKLDPC) are compositionally biased toward basic and acidic residues. Over residues 531-543 (ASASSGSDQGPSS) the composition is skewed to low complexity.

This sequence belongs to the TUBGCP family. As to quaternary structure, component of the gamma-tubulin ring complex (gTuRC) consisting of TUBGCP2, TUBGCP3, TUBGCP4, TUBGCP5 and TUBGCP6 and gamma-tubulin TUBG1 or TUBG2. TUBGCP2, TUBGCP3, TUBGCP4, TUBGCP5 and TUBGCP6 assemble in a 5:5:2:1:1 stoichiometry; each is associated with a gamma-tubulin, thereby arranging 14 gamma-tubulins in a helical manner. Gamma-tubulin at the first position is blocked by TUBGCP3 at the last position, allowing 13 protafilaments to grow into a microtubule. The gTuRC (via TUBGCP3 and TUBGCP6) interacts with ACTB and MZT1; the interactions form a luminal bridge that stabilizes the initial structure during complex assembly. The gTuRC (via TUBGCP2) interacts with MZT2A/MZT2B and CDK5RAP2 (via CM1 motif); the interactions play a role in gTuRC activation. In terms of tissue distribution, widely expressed, with highest levels in heart and skeletal muscle and moderate levels in brain.

The protein localises to the cytoplasm. It localises to the cytoskeleton. It is found in the microtubule organizing center. The protein resides in the centrosome. Its function is as follows. Component of the gamma-tubulin ring complex (gTuRC) which mediates microtubule nucleation. The gTuRC regulates the minus-end nucleation of alpha-beta tubulin heterodimers that grow into microtubule protafilaments, a critical step in centrosome duplication and spindle formation. This chain is Gamma-tubulin complex component 5 (TUBGCP5), found in Homo sapiens (Human).